A 295-amino-acid chain; its full sequence is Myosin light chain kinase A (295 aa).

A Protein kinase domain is found at 8–265 (YEFKEELGRG…ATNALNHPWL (258 aa)). ATP is bound by residues 14 to 22 (LGRGAFSIV) and Lys-37. Asp-130 acts as the Proton acceptor in catalysis. Residues Thr-166 and Thr-289 each carry the phosphothreonine modification. The tract at residues 264–295 (WLKSNNSNNTIDTVKMKEYIVERQKTQTKLVN) is autoinhibitory domain.

Belongs to the protein kinase superfamily. CAMK Ser/Thr protein kinase family. CaMK subfamily. Post-translationally, autophosphorylated. Transiently phosphorylated on Thr-166 and Thr-289. This phosphorylation is gbpC-dependent.

The catalysed reaction is L-seryl-[myosin light chain] + ATP = O-phospho-L-seryl-[myosin light chain] + ADP + H(+). The enzyme catalyses L-threonyl-[myosin light chain] + ATP = O-phospho-L-threonyl-[myosin light chain] + ADP + H(+). Possesses an autoinhibitory domain. Autophosphorylation appears to increase the enzymatic activity. Activation is gbdC-dependent. Does not have a calmodulin-binding domain. Functionally, phosphorylates a specific serine in the N-terminus of a myosin light chain. Phosphorylates regulatory myosin light chain (mlcR) during chemotaxis. mlcR phosphorylation increases the motility and actin-activated ATPase activity of myosin, contributing to chemotaxis. In Dictyostelium discoideum (Social amoeba), this protein is Myosin light chain kinase A (mlkA).